Consider the following 613-residue polypeptide: Putative lipase atg15 (613 aa).

Over 1–20 the chain is Cytoplasmic; that stretch reads MKSHQGHQKKRRMREMGFST. A helical; Signal-anchor for type II membrane protein transmembrane segment spans residues 21-43; the sequence is LLLGASLLLPVSVSASAPPSIYS. The Lumenal portion of the chain corresponds to 44 to 613; sequence RPYDSSPFLS…TSDHPITTPP (570 aa). N-linked (GlcNAc...) asparagine glycans are attached at residues Asn202, Asn224, Asn282, and Asn306. The active-site Charge relay system is the Ser322. N-linked (GlcNAc...) asparagine glycosylation occurs at Asn468. Positions 472 to 492 are disordered; the sequence is HTTTTTTTTTTTTTPPSTSTS. Positions 473–492 are enriched in low complexity; that stretch reads TTTTTTTTTTTTTPPSTSTS.

It belongs to the AB hydrolase superfamily. Lipase family. Binds to both phosphatidylinositol (PI) and phosphatidylinositol 3,5-bisphosphate (PIP2).

Its subcellular location is the endosome. The protein resides in the multivesicular body membrane. The protein localises to the prevacuolar compartment membrane. It carries out the reaction a triacylglycerol + H2O = a diacylglycerol + a fatty acid + H(+). In terms of biological role, lipase which is essential for lysis of subvacuolar cytoplasm to vacuole targeted bodies and intravacuolar autophagic bodies. Involved in the lysis of intravacuolar multivesicular body (MVB) vesicles. The intravacuolar membrane disintegration by atg15 is critical to life span extension. The polypeptide is Putative lipase atg15 (atg15) (Aspergillus terreus (strain NIH 2624 / FGSC A1156)).